The sequence spans 672 residues: tRNA 5-methylaminomethyl-2-thiouridine biosynthesis bifunctional protein MnmC (672 aa).

A tRNA (mnm(5)s(2)U34)-methyltransferase region spans residues 1 to 243 (MTSITHAELG…KREMIAGCME (243 aa)). The interval 269 to 672 (IGGGIASAAL…LRKGKAITEL (404 aa)) is FAD-dependent cmnm(5)s(2)U34 oxidoreductase.

In the N-terminal section; belongs to the methyltransferase superfamily. tRNA (mnm(5)s(2)U34)-methyltransferase family. This sequence in the C-terminal section; belongs to the DAO family. The cofactor is FAD.

The protein resides in the cytoplasm. It carries out the reaction 5-aminomethyl-2-thiouridine(34) in tRNA + S-adenosyl-L-methionine = 5-methylaminomethyl-2-thiouridine(34) in tRNA + S-adenosyl-L-homocysteine + H(+). Functionally, catalyzes the last two steps in the biosynthesis of 5-methylaminomethyl-2-thiouridine (mnm(5)s(2)U) at the wobble position (U34) in tRNA. Catalyzes the FAD-dependent demodification of cmnm(5)s(2)U34 to nm(5)s(2)U34, followed by the transfer of a methyl group from S-adenosyl-L-methionine to nm(5)s(2)U34, to form mnm(5)s(2)U34. This is tRNA 5-methylaminomethyl-2-thiouridine biosynthesis bifunctional protein MnmC from Vibrio vulnificus (strain YJ016).